Here is a 209-residue protein sequence, read N- to C-terminus: Ubiquitin-conjugating enzyme E2 S (209 aa).

One can recognise a UBC core domain in the interval Q14–Q160. The active-site Glycyl thioester intermediate is the C98. Residues A168–K194 are disordered. Positions A184–K194 are enriched in basic and acidic residues.

Belongs to the ubiquitin-conjugating enzyme family.

The enzyme catalyses S-ubiquitinyl-[E1 ubiquitin-activating enzyme]-L-cysteine + [E2 ubiquitin-conjugating enzyme]-L-cysteine = [E1 ubiquitin-activating enzyme]-L-cysteine + S-ubiquitinyl-[E2 ubiquitin-conjugating enzyme]-L-cysteine.. It participates in protein modification; protein ubiquitination. Functionally, catalyzes the covalent attachment of ubiquitin to other proteins. Acts as an essential factor of the anaphase promoting complex/cyclosome (APC/C), a cell cycle-regulated ubiquitin ligase that controls progression through mitosis. Acts by specifically elongating polyubiquitin chains initiated by the E2 enzyme vih/UbcH10 on APC/C substrates, enhancing the degradation of APC/C substrates by the proteasome and promoting mitotic exit. This chain is Ubiquitin-conjugating enzyme E2 S, found in Drosophila melanogaster (Fruit fly).